The chain runs to 431 residues: Histidinol dehydrogenase (431 aa).

Residues Y127, Q185, and N208 each contribute to the NAD(+) site. Substrate is bound by residues S234, Q256, and H259. The Zn(2+) site is built by Q256 and H259. Residues E323 and H324 each act as proton acceptor in the active site. Substrate-binding residues include H324, D357, E411, and H416. A Zn(2+)-binding site is contributed by D357. H416 is a binding site for Zn(2+).

Belongs to the histidinol dehydrogenase family. Zn(2+) serves as cofactor.

It catalyses the reaction L-histidinol + 2 NAD(+) + H2O = L-histidine + 2 NADH + 3 H(+). The protein operates within amino-acid biosynthesis; L-histidine biosynthesis; L-histidine from 5-phospho-alpha-D-ribose 1-diphosphate: step 9/9. In terms of biological role, catalyzes the sequential NAD-dependent oxidations of L-histidinol to L-histidinaldehyde and then to L-histidine. The chain is Histidinol dehydrogenase from Vibrio vulnificus (strain CMCP6).